Reading from the N-terminus, the 473-residue chain is Trehalose-6-phosphate synthase (473 aa).

Arg10 lines the D-glucose 6-phosphate pocket. UDP-alpha-D-glucose is bound at residue Gly21 to Gly22. Tyr76 and Asp130 together coordinate D-glucose 6-phosphate. Positions 262 and 267 each coordinate UDP-alpha-D-glucose. Arg300 serves as a coordination point for D-glucose 6-phosphate. UDP-alpha-D-glucose-binding positions include Phe339 and Leu365–Glu369.

The protein belongs to the glycosyltransferase 20 family. As to quaternary structure, homotetramer.

The enzyme catalyses D-glucose 6-phosphate + UDP-alpha-D-glucose = alpha,alpha-trehalose 6-phosphate + UDP + H(+). It participates in glycan biosynthesis; trehalose biosynthesis. Its function is as follows. Probably involved in the osmoprotection via the biosynthesis of trehalose. Catalyzes the transfer of glucose from UDP-alpha-D-glucose (UDP-Glc) to D-glucose 6-phosphate (Glc-6-P) to form trehalose-6-phosphate. Acts with retention of the anomeric configuration of the UDP-sugar donor. The polypeptide is Trehalose-6-phosphate synthase (otsA) (Salmonella arizonae (strain ATCC BAA-731 / CDC346-86 / RSK2980)).